A 370-amino-acid chain; its full sequence is Actin-related protein 2/3 complex subunit 1A-B (370 aa).

6 WD repeats span residues F6–C45, E50–T89, P140–K179, S202–Q241, T244–S284, and L322–Q365.

It belongs to the WD repeat ARPC1 family. As to quaternary structure, component of the Arp2/3 complex.

It is found in the cytoplasm. The protein resides in the cytoskeleton. The protein localises to the nucleus. In terms of biological role, probably functions as a component of the Arp2/3 complex which is involved in regulation of actin polymerization and together with an activating nucleation-promoting factor (NPF) mediates the formation of branched actin networks. In addition to its role in the cytoplasmic cytoskeleton, the Arp2/3 complex also promotes actin polymerization in the nucleus, thereby regulating gene transcription and repair of damaged DNA. The polypeptide is Actin-related protein 2/3 complex subunit 1A-B (arpc1a-b) (Xenopus laevis (African clawed frog)).